Reading from the N-terminus, the 280-residue chain is 2,3,4,5-tetrahydropyridine-2,6-dicarboxylate N-succinyltransferase (280 aa).

Substrate is bound by residues Arg-107 and Asp-144.

This sequence belongs to the transferase hexapeptide repeat family. As to quaternary structure, homotrimer.

Its subcellular location is the cytoplasm. It catalyses the reaction (S)-2,3,4,5-tetrahydrodipicolinate + succinyl-CoA + H2O = (S)-2-succinylamino-6-oxoheptanedioate + CoA. It participates in amino-acid biosynthesis; L-lysine biosynthesis via DAP pathway; LL-2,6-diaminopimelate from (S)-tetrahydrodipicolinate (succinylase route): step 1/3. This is 2,3,4,5-tetrahydropyridine-2,6-dicarboxylate N-succinyltransferase from Paramagnetospirillum magneticum (strain ATCC 700264 / AMB-1) (Magnetospirillum magneticum).